We begin with the raw amino-acid sequence, 92 residues long: uncharacterized protein (92 aa).

3 helical membrane-spanning segments follow: residues 1-21, 30-50, and 62-82; these read MNIYVWLFAIIALSFSALVGL, ANVLVGESIITVVAGTLIVVI, and IALAIFICGVVGAFAFCKVIG.

This sequence to M.thermoautotrophicum MTH1250.

Its subcellular location is the cell membrane. This is an uncharacterized protein from Methanocaldococcus jannaschii (strain ATCC 43067 / DSM 2661 / JAL-1 / JCM 10045 / NBRC 100440) (Methanococcus jannaschii).